A 224-amino-acid polypeptide reads, in one-letter code: Ribonuclease HII (224 aa).

One can recognise an RNase H type-2 domain in the interval 1 to 210 (MKLGGIDEAG…LKKIEEKLQK (210 aa)). A divalent metal cation-binding residues include Asp7, Glu8, and Asp105.

Belongs to the RNase HII family. The cofactor is Mn(2+). Mg(2+) is required as a cofactor.

It localises to the cytoplasm. It carries out the reaction Endonucleolytic cleavage to 5'-phosphomonoester.. Its function is as follows. Endonuclease that specifically degrades the RNA of RNA-DNA hybrids. The chain is Ribonuclease HII from Thermococcus sibiricus (strain DSM 12597 / MM 739).